A 179-amino-acid polypeptide reads, in one-letter code: Large ribosomal subunit protein uL5 (179 aa).

Belongs to the universal ribosomal protein uL5 family. As to quaternary structure, part of the 50S ribosomal subunit; part of the 5S rRNA/L5/L18/L25 subcomplex. Contacts the 5S rRNA and the P site tRNA. Forms a bridge to the 30S subunit in the 70S ribosome.

Functionally, this is one of the proteins that bind and probably mediate the attachment of the 5S RNA into the large ribosomal subunit, where it forms part of the central protuberance. In the 70S ribosome it contacts protein S13 of the 30S subunit (bridge B1b), connecting the 2 subunits; this bridge is implicated in subunit movement. Contacts the P site tRNA; the 5S rRNA and some of its associated proteins might help stabilize positioning of ribosome-bound tRNAs. This Burkholderia mallei (strain ATCC 23344) protein is Large ribosomal subunit protein uL5.